The following is a 679-amino-acid chain: Stress-70 protein, mitochondrial (679 aa).

A mitochondrion-targeting transit peptide spans 1 to 46 (MISASRAAVSRFVGTAASRGPTAARHQDGWNGLSHEAFRIVSRRDY). The tract at residues 1–432 (MISASRAAVS…IQGGVLAGDV (432 aa)) is interaction with NFS1. Residues T63 and N64 each coordinate ADP. Residues 63-431 (TNSCVAVMEG…AIQGGVLAGD (369 aa)) are nucleotide-binding domain (NBD). Residue K76 is modified to N6-acetyllysine. At T87 the chain carries Phosphothreonine. N6-acetyllysine; alternate is present on residues K135 and K138. N6-succinyllysine; alternate is present on residues K135 and K138. K143 is modified (N6-acetyllysine). Residue K206 is modified to N6-acetyllysine; alternate. K206 carries the N6-succinyllysine; alternate modification. Residue K206 is modified to N6-malonyllysine; alternate. N6-acetyllysine is present on residues K234 and K288. Residue K300 is modified to N6-acetyllysine; alternate. K300 carries the N6-succinyllysine; alternate modification. The ADP site is built by E313, K316, and S320. N6-succinyllysine is present on K368. ADP contacts are provided by G388 and R391. K394 carries the post-translational modification N6-succinyllysine. Residue S408 is modified to Phosphoserine. An interdomain linker region spans residues 432–441 (VTDVLLLDVT). The segment at 432–679 (VTDVLLLDVT…QKDNQKEEKQ (248 aa)) is interaction with FXN and ISCU. A substrate-binding domain (SBD) region spans residues 442–679 (PLSLGIETLG…QKDNQKEEKQ (238 aa)). Omega-N-methylarginine is present on R513. An N6-acetyllysine; alternate mark is found at K567 and K600. An N6-succinyllysine; alternate mark is found at K567 and K600. Residue K610 is modified to N6-succinyllysine. K612 is subject to N6-acetyllysine. The residue at position 646 (K646) is an N6-acetyllysine; alternate. K646 bears the N6-succinyllysine; alternate mark. The interval 656–679 (ASEREGSGSSGTGEQKDNQKEEKQ) is disordered. Residues 669–679 (EQKDNQKEEKQ) show a composition bias toward basic and acidic residues.

It belongs to the heat shock protein 70 family. In terms of assembly, interacts strongly with the intermediate form of FXN and weakly with its mature form. Interacts with HSCB. Associates with the mitochondrial contact site and cristae organizing system (MICOS) complex, composed of at least MICOS10/MIC10, CHCHD3/MIC19, CHCHD6/MIC25, APOOL/MIC27, IMMT/MIC60, APOO/MIC23/MIC26 and QIL1/MIC13. This complex was also known under the names MINOS or MitOS complex. The MICOS complex associates with mitochondrial outer membrane proteins SAMM50, MTX1, MTX2 and DNAJC11, mitochondrial inner membrane protein TMEM11 and with HSPA9. Interacts with DNLZ, the interaction is required to prevent self-aggregation. Interacts with TESPA1. Interacts with PDPN. Interacts with NFU1, NFS1 and ISCU. Interacts with TP53; the interaction promotes TP53 degradation. Interacts (via SBD domain) with UBXN2A; the interaction with UBXN2A inhibits HSPA9/MOT-2 interaction with and degradation of TP53, thereby promotes TP53 translocation to the nucleus. Interacts with ITPR1 AND VDAC1; this interaction couples ITPR1 to VDAC1. Component of the TIM23 mitochondrial inner membrane pre-sequence translocase complex.

The protein resides in the mitochondrion. Its subcellular location is the nucleus. The protein localises to the nucleolus. It is found in the cytoplasm. It localises to the mitochondrion matrix. It carries out the reaction ATP + H2O = ADP + phosphate + H(+). With respect to regulation, the chaperone activity is regulated by ATP-induced allosteric coupling of the nucleotide-binding (NBD) and substrate-binding (SBD) domains. ATP binding in the NBD leads to a conformational change in the NBD, which is transferred through the interdomain linker (IDL) to the substrate-binding domain (SBD). This elicits a reduced substrate affinity and a faster substrate exchange rate. Upon hydrolysis of ATP to ADP, the protein undergoes a conformational change that increases its affinity for substrate proteins. It cycles through repeated phases of ATP hydrolysis and nucleotide exchange, facilitating repeated cycles of substrate binding and release. Functions in collaboration with co-chaperones. Functions with the co-chaperone, DNLZ, to maintain solubility and regulate ATP hydrolysis. Nucleotide exchange factors, GRPEL1 and GRPEL2, accelerate nucleotide exchange. Functionally, mitochondrial chaperone that plays a key role in mitochondrial protein import, folding, and assembly. Plays an essential role in the protein quality control system, the correct folding of proteins, the re-folding of misfolded proteins, and the targeting of proteins for subsequent degradation. These processes are achieved through cycles of ATP binding, ATP hydrolysis, and ADP release, mediated by co-chaperones. In mitochondria, it associates with the TIM (translocase of the inner membrane) protein complex to assist in the import and folding of mitochondrial proteins. Plays an important role in mitochondrial iron-sulfur cluster (ISC) biogenesis, interacts with and stabilizes ISC cluster assembly proteins FXN, NFU1, NFS1 and ISCU. Regulates erythropoiesis via stabilization of ISC assembly. Regulates mitochondrial calcium-dependent apoptosis by coupling two calcium channels, ITPR1 and VDAC1, at the mitochondria-associated endoplasmic reticulum (ER) membrane to facilitate calcium transport from the ER lumen to the mitochondria intermembrane space, providing calcium for the downstream calcium channel MCU, which releases it into the mitochondrial matrix. Although primarily located in the mitochondria, it is also found in other cellular compartments. In the cytosol, it associates with proteins involved in signaling, apoptosis, or senescence. It may play a role in cell cycle regulation via its interaction with and promotion of degradation of TP53. May play a role in the control of cell proliferation and cellular aging. Protects against reactive oxygen species (ROS). Extracellular HSPA9 plays a cytoprotective role by preventing cell lysis following immune attack by the membrane attack complex by disrupting formation of the complex. The protein is Stress-70 protein, mitochondrial of Bos taurus (Bovine).